Consider the following 124-residue polypeptide: Putative membrane protein insertion efficiency factor (124 aa).

Positions 1–24 (MHDPHGHAHTVRPPGRGRNWPGPW) are disordered. Positions 12–24 (RPPGRGRNWPGPW) are enriched in low complexity.

This sequence belongs to the UPF0161 family.

It localises to the cell inner membrane. Could be involved in insertion of integral membrane proteins into the membrane. The polypeptide is Putative membrane protein insertion efficiency factor (Mesorhizobium japonicum (strain LMG 29417 / CECT 9101 / MAFF 303099) (Mesorhizobium loti (strain MAFF 303099))).